The following is a 298-amino-acid chain: Quinolinate synthase (298 aa).

Residues H19 and S36 each coordinate iminosuccinate. Residue C81 coordinates [4Fe-4S] cluster. Residues 107–109 (YVN) and S124 each bind iminosuccinate. C168 is a binding site for [4Fe-4S] cluster. Iminosuccinate contacts are provided by residues 193-195 (HPE) and T210. Residue C254 coordinates [4Fe-4S] cluster.

Belongs to the quinolinate synthase family. Type 2 subfamily. [4Fe-4S] cluster serves as cofactor.

It is found in the cytoplasm. It catalyses the reaction iminosuccinate + dihydroxyacetone phosphate = quinolinate + phosphate + 2 H2O + H(+). It functions in the pathway cofactor biosynthesis; NAD(+) biosynthesis; quinolinate from iminoaspartate: step 1/1. Functionally, catalyzes the condensation of iminoaspartate with dihydroxyacetone phosphate to form quinolinate. The sequence is that of Quinolinate synthase from Thermotoga sp. (strain RQ2).